We begin with the raw amino-acid sequence, 776 residues long: Protein translocase subunit SecA 2 (776 aa).

ATP is bound by residues Gln-80, 98–102 (GEGKT), and Asp-486.

The protein belongs to the SecA family. As to quaternary structure, monomer and homodimer. Part of the essential Sec protein translocation apparatus which comprises SecA, SecYEG and auxiliary proteins SecDF. Other proteins may also be involved.

The protein resides in the cell membrane. The protein localises to the cytoplasm. The enzyme catalyses ATP + H2O + cellular proteinSide 1 = ADP + phosphate + cellular proteinSide 2.. Functionally, part of the Sec protein translocase complex. Interacts with the SecYEG preprotein conducting channel. Has a central role in coupling the hydrolysis of ATP to the transfer of proteins into and across the cell membrane, serving as an ATP-driven molecular motor driving the stepwise translocation of polypeptide chains across the membrane. The polypeptide is Protein translocase subunit SecA 2 (Listeria monocytogenes serovar 1/2a (strain ATCC BAA-679 / EGD-e)).